The following is a 305-amino-acid chain: Dermonecrotic toxin LiSicTox-alphaII1 (305 aa).

The N-terminal stretch at 1–18 (MLLHIALILGCWSVFSEG) is a signal peptide. The propeptide occupies 19–26 (AETDVAER). H38 is an active-site residue. Mg(2+)-binding residues include E58 and D60. H74 (nucleophile) is an active-site residue. 2 cysteine pairs are disulfide-bonded: C78–C84 and C80–C223. Position 118 (D118) interacts with Mg(2+).

The protein belongs to the arthropod phospholipase D family. Class II subfamily. Class IIa sub-subfamily. Mg(2+) serves as cofactor. As to expression, expressed by the venom gland.

The protein resides in the secreted. It carries out the reaction an N-(acyl)-sphingosylphosphocholine = an N-(acyl)-sphingosyl-1,3-cyclic phosphate + choline. It catalyses the reaction an N-(acyl)-sphingosylphosphoethanolamine = an N-(acyl)-sphingosyl-1,3-cyclic phosphate + ethanolamine. The enzyme catalyses a 1-acyl-sn-glycero-3-phosphocholine = a 1-acyl-sn-glycero-2,3-cyclic phosphate + choline. The catalysed reaction is a 1-acyl-sn-glycero-3-phosphoethanolamine = a 1-acyl-sn-glycero-2,3-cyclic phosphate + ethanolamine. Dermonecrotic toxins cleave the phosphodiester linkage between the phosphate and headgroup of certain phospholipids (sphingolipid and lysolipid substrates), forming an alcohol (often choline) and a cyclic phosphate. This toxin acts on sphingomyelin (SM) wih high activity. It may also act on ceramide phosphoethanolamine (CPE), lysophosphatidylcholine (LPC) and lysophosphatidylethanolamine (LPE), but not on lysophosphatidylserine (LPS), and lysophosphatidylglycerol (LPG). It acts by transphosphatidylation, releasing exclusively cyclic phosphate products as second products. Shows high hemolytic activity. Causes dermonecrosis, induces inflammatory response, platelet aggregation and increases vessel permeability. Shows no lethality when injected at higher dose into mice. May cause complement-dependent hemolysis as well as in a complement-independent manner. The hemolysis provoked in a complement-independent manner may be composed of several steps. The toxin may bind to erythrocyte membranes, may hydrolyze membrane phospholipids (SM and LPC) thus generating metabolism products that may cause hemolysis, probably by provoking an increase of calcium inside cells. The calcium influx may be due to the opening of L-type calcium channels, since L-type calcium channel blockers inhibit calcium influx. The chain is Dermonecrotic toxin LiSicTox-alphaII1 from Loxosceles intermedia (Brown spider).